Reading from the N-terminus, the 294-residue chain is Elongation factor Ts (294 aa).

The segment at 80-83 (TDFV) is involved in Mg(2+) ion dislocation from EF-Tu.

This sequence belongs to the EF-Ts family.

It localises to the cytoplasm. In terms of biological role, associates with the EF-Tu.GDP complex and induces the exchange of GDP to GTP. It remains bound to the aminoacyl-tRNA.EF-Tu.GTP complex up to the GTP hydrolysis stage on the ribosome. The protein is Elongation factor Ts of Polynucleobacter asymbioticus (strain DSM 18221 / CIP 109841 / QLW-P1DMWA-1) (Polynucleobacter necessarius subsp. asymbioticus).